The following is a 237-amino-acid chain: tRNA (guanine-N(7)-)-methyltransferase (237 aa).

Residues Glu67, Glu92, Asp119, and Asp142 each contribute to the S-adenosyl-L-methionine site. Asp142 is a catalytic residue. Residues Lys146, Asp178, and 215–218 (TKFE) each bind substrate.

It belongs to the class I-like SAM-binding methyltransferase superfamily. TrmB family.

It carries out the reaction guanosine(46) in tRNA + S-adenosyl-L-methionine = N(7)-methylguanosine(46) in tRNA + S-adenosyl-L-homocysteine. The protein operates within tRNA modification; N(7)-methylguanine-tRNA biosynthesis. Catalyzes the formation of N(7)-methylguanine at position 46 (m7G46) in tRNA. The chain is tRNA (guanine-N(7)-)-methyltransferase from Aeromonas hydrophila subsp. hydrophila (strain ATCC 7966 / DSM 30187 / BCRC 13018 / CCUG 14551 / JCM 1027 / KCTC 2358 / NCIMB 9240 / NCTC 8049).